A 464-amino-acid polypeptide reads, in one-letter code: Glycine receptor subunit alpha-3 (464 aa).

The first 33 residues, 1–33, serve as a signal peptide directing secretion; it reads MAHVRHFRTLVSGFYFWEAALLLSLVATKETDS. At 34 to 255 the chain is on the extracellular side; that stretch reads ARSRSAPMSP…RFHLERQMGY (222 aa). An N-linked (GlcNAc...) asparagine glycan is attached at Asn71. A disulfide bridge links Cys171 with Cys185. Zn(2+)-binding residues include Glu225 and Asp227. A disulfide bond links Cys231 and Cys242. Residue 235–240 coordinates strychnine; it reads YNTGKF. Residue His248 coordinates Zn(2+). The chain crosses the membrane as a helical span at residues 256–277; that stretch reads YLIQMYIPSLLIVILSWVSFWI. The Cytoplasmic portion of the chain corresponds to 278–282; the sequence is NMDAA. Residues 283–303 traverse the membrane as a helical segment; sequence PARVALGITTVLTMTTQSSGS. Residues 304–314 are Extracellular-facing; sequence RASLPKVSYVK. A helical membrane pass occupies residues 315–335; the sequence is AIDIWMAVCLLFVFSALLEYA. Over 336–430 the chain is Cytoplasmic; the sequence is AVNFVSRQHK…FIDRAKKIDT (95 aa). Phosphoserine occurs at positions 370 and 379. Residues 431-451 form a helical membrane-spanning segment; sequence ISRACFPLAFLIFNIFYWVIY. Residues 452-464 lie on the Extracellular side of the membrane; it reads KILRHEDIHQQQD.

Belongs to the ligand-gated ion channel (TC 1.A.9) family. Glycine receptor (TC 1.A.9.3) subfamily. GLRA3 sub-subfamily. As to quaternary structure, homopentamer (in vitro). Heteropentamer composed of GLRA3 and GLRB. Both homopentamers and heteropentamers form functional ion channels, but their characteristics are subtly different. Post-translationally, phosphorylated by PKA; this causes down-regulation of channel activity. In terms of tissue distribution, widely distributed throughout the central nervous system.

The protein resides in the postsynaptic cell membrane. The protein localises to the perikaryon. It localises to the cell projection. It is found in the dendrite. Its subcellular location is the synapse. The protein resides in the cell membrane. The catalysed reaction is chloride(in) = chloride(out). Glycine receptors are ligand-gated chloride channels. Channel opening is triggered by extracellular glycine. Channel characteristics depend on the subunit composition; heteropentameric channels display faster channel closure. Plays an important role in the down-regulation of neuronal excitability. Contributes to the generation of inhibitory postsynaptic currents. Contributes to increased pain perception in response to increased prostaglandin E2 levels. Plays a role in cellular responses to ethanol. This is Glycine receptor subunit alpha-3 (GLRA3) from Homo sapiens (Human).